Reading from the N-terminus, the 338-residue chain is (2Z,6E)-hedycaryol synthase (338 aa).

Residues D82 and E87 each coordinate Mg(2+). The short motif at 82–87 is the DDXXXE motif element; sequence DDQIDE. R175 contributes to the substrate binding site. Residues N221 and S225 each coordinate Mg(2+). An NXXXSXXXE motif motif is present at residues 221–229; sequence NDVFSVERE. A substrate-binding site is contributed by R228. Mg(2+) is bound at residue E229.

The protein belongs to the terpene synthase family. As to quaternary structure, homodimer. Requires Mg(2+) as cofactor.

The catalysed reaction is (2E,6E)-farnesyl diphosphate + H2O = (2Z,6E)-hedycaryol + diphosphate. The protein operates within secondary metabolite biosynthesis; terpenoid biosynthesis. Its function is as follows. Catalyzes the conversion of (2E,6E)-farnesyl diphosphate (FPP) into (2Z,6E)-hedycaryol via a 1,11-cyclization. In Kitasatospora setae (strain ATCC 33774 / DSM 43861 / JCM 3304 / KCC A-0304 / NBRC 14216 / KM-6054) (Streptomyces setae), this protein is (2Z,6E)-hedycaryol synthase.